We begin with the raw amino-acid sequence, 582 residues long: 2-succinyl-5-enolpyruvyl-6-hydroxy-3-cyclohexene-1-carboxylate synthase (582 aa).

The protein belongs to the TPP enzyme family. MenD subfamily. In terms of assembly, homodimer. Mg(2+) is required as a cofactor. Mn(2+) serves as cofactor. The cofactor is thiamine diphosphate.

It carries out the reaction isochorismate + 2-oxoglutarate + H(+) = 5-enolpyruvoyl-6-hydroxy-2-succinyl-cyclohex-3-ene-1-carboxylate + CO2. It functions in the pathway quinol/quinone metabolism; 1,4-dihydroxy-2-naphthoate biosynthesis; 1,4-dihydroxy-2-naphthoate from chorismate: step 2/7. It participates in cofactor biosynthesis; phylloquinone biosynthesis. In terms of biological role, catalyzes the thiamine diphosphate-dependent decarboxylation of 2-oxoglutarate and the subsequent addition of the resulting succinic semialdehyde-thiamine pyrophosphate anion to isochorismate to yield 2-succinyl-5-enolpyruvyl-6-hydroxy-3-cyclohexene-1-carboxylate (SEPHCHC). This is 2-succinyl-5-enolpyruvyl-6-hydroxy-3-cyclohexene-1-carboxylate synthase from Prochlorococcus marinus (strain MIT 9303).